Reading from the N-terminus, the 298-residue chain is Probable protein phosphatase 2C 26 (298 aa).

Residues 48–295 enclose the PPM-type phosphatase domain; sequence SVGIHAIPHP…DDVTVIVAKV (248 aa). Positions 82, 83, 213, and 286 each coordinate Mn(2+).

It belongs to the PP2C family. The cofactor is Mg(2+). It depends on Mn(2+) as a cofactor.

The catalysed reaction is O-phospho-L-seryl-[protein] + H2O = L-seryl-[protein] + phosphate. It catalyses the reaction O-phospho-L-threonyl-[protein] + H2O = L-threonyl-[protein] + phosphate. The sequence is that of Probable protein phosphatase 2C 26 from Arabidopsis thaliana (Mouse-ear cress).